The primary structure comprises 193 residues: E3 ubiquitin-protein ligase RMA2 (193 aa).

The RING-type zinc finger occupies 21-75 (CNICLDQVRDPVVTLCGHLFCWPCIHKWTYASNNSRQRVDQYDHKREPPKCPVCK). Residues 175–192 (LSRVYLFLLCFMFMCLFL) form a helical; Anchor for type IV membrane protein membrane-spanning segment.

In terms of assembly, interacts with ERABP1. Barely detected in roots and limited to the root tips. Expressed in leaf hydathodes and in siliques.

It is found in the endoplasmic reticulum membrane. The enzyme catalyses S-ubiquitinyl-[E2 ubiquitin-conjugating enzyme]-L-cysteine + [acceptor protein]-L-lysine = [E2 ubiquitin-conjugating enzyme]-L-cysteine + N(6)-ubiquitinyl-[acceptor protein]-L-lysine.. Its pathway is protein modification; protein ubiquitination. Functionally, E3 ubiquitin-protein ligase that promotes the ubiquitination and proteasomal degradation of the auxin-binding protein ERABP1. In Arabidopsis thaliana (Mouse-ear cress), this protein is E3 ubiquitin-protein ligase RMA2 (RMA2).